The chain runs to 89 residues: Small ribosomal subunit protein uS15 (89 aa).

This sequence belongs to the universal ribosomal protein uS15 family. In terms of assembly, part of the 30S ribosomal subunit. Forms a bridge to the 50S subunit in the 70S ribosome, contacting the 23S rRNA.

One of the primary rRNA binding proteins, it binds directly to 16S rRNA where it helps nucleate assembly of the platform of the 30S subunit by binding and bridging several RNA helices of the 16S rRNA. Its function is as follows. Forms an intersubunit bridge (bridge B4) with the 23S rRNA of the 50S subunit in the ribosome. This chain is Small ribosomal subunit protein uS15, found in Pseudarthrobacter chlorophenolicus (strain ATCC 700700 / DSM 12829 / CIP 107037 / JCM 12360 / KCTC 9906 / NCIMB 13794 / A6) (Arthrobacter chlorophenolicus).